A 135-amino-acid chain; its full sequence is uncharacterized protein (135 aa).

Positions 1 to 36 (MSHAEKPMSDSVNHHHHRTFEVLTAEPVRSRRKPRH) are disordered.

This sequence belongs to the transposase 8 family.

This is an uncharacterized protein from Sinorhizobium fredii (strain NBRC 101917 / NGR234).